A 280-amino-acid chain; its full sequence is Ribosomal protein L11 methyltransferase (280 aa).

Residues Thr130, Gly151, Asp172, and Asn213 each coordinate S-adenosyl-L-methionine.

It belongs to the methyltransferase superfamily. PrmA family.

It is found in the cytoplasm. It carries out the reaction L-lysyl-[protein] + 3 S-adenosyl-L-methionine = N(6),N(6),N(6)-trimethyl-L-lysyl-[protein] + 3 S-adenosyl-L-homocysteine + 3 H(+). Functionally, methylates ribosomal protein L11. This chain is Ribosomal protein L11 methyltransferase, found in Nitratiruptor sp. (strain SB155-2).